Reading from the N-terminus, the 844-residue chain is DNA mismatch repair protein MutS (844 aa).

Glycine 610 to serine 617 serves as a coordination point for ATP.

The protein belongs to the DNA mismatch repair MutS family.

In terms of biological role, this protein is involved in the repair of mismatches in DNA. It is possible that it carries out the mismatch recognition step. This protein has a weak ATPase activity. The sequence is that of DNA mismatch repair protein MutS from Francisella tularensis subsp. novicida (strain U112).